We begin with the raw amino-acid sequence, 175 residues long: RNA pyrophosphohydrolase (175 aa).

The 144-residue stretch at 6-149 (GYRPNVGIVI…KRDVYRRVMK (144 aa)) folds into the Nudix hydrolase domain. The Nudix box signature appears at 38–59 (GGINPGETAEQAMYRELFEEVG).

It belongs to the Nudix hydrolase family. RppH subfamily. It depends on a divalent metal cation as a cofactor.

Accelerates the degradation of transcripts by removing pyrophosphate from the 5'-end of triphosphorylated RNA, leading to a more labile monophosphorylated state that can stimulate subsequent ribonuclease cleavage. The protein is RNA pyrophosphohydrolase of Serratia proteamaculans (strain 568).